A 458-amino-acid polypeptide reads, in one-letter code: Ribulose bisphosphate carboxylase large chain (458 aa).

An N6,N6,N6-trimethyllysine modification is found at K7. Substrate contacts are provided by N116 and T166. K168 acts as the Proton acceptor in catalysis. Substrate is bound at residue K170. Mg(2+) contacts are provided by K194, D196, and E197. N6-carboxylysine is present on K194. The active-site Proton acceptor is H287. 3 residues coordinate substrate: R288, H320, and S372.

Belongs to the RuBisCO large chain family. Type I subfamily. Heterohexadecamer of 8 large chains and 8 small chains; disulfide-linked. The disulfide link is formed within the large subunit homodimers. Mg(2+) is required as a cofactor. Post-translationally, the disulfide bond which can form in the large chain dimeric partners within the hexadecamer appears to be associated with oxidative stress and protein turnover.

Its subcellular location is the plastid. It is found in the chloroplast. The enzyme catalyses 2 (2R)-3-phosphoglycerate + 2 H(+) = D-ribulose 1,5-bisphosphate + CO2 + H2O. It carries out the reaction D-ribulose 1,5-bisphosphate + O2 = 2-phosphoglycolate + (2R)-3-phosphoglycerate + 2 H(+). Its function is as follows. RuBisCO catalyzes two reactions: the carboxylation of D-ribulose 1,5-bisphosphate, the primary event in carbon dioxide fixation, as well as the oxidative fragmentation of the pentose substrate in the photorespiration process. Both reactions occur simultaneously and in competition at the same active site. The protein is Ribulose bisphosphate carboxylase large chain of Gladiolus gueinzii (Coastal gladiolus).